The sequence spans 191 residues: MQREDVLGEALKLLELQGIANTTLEMVAERVDYPLDELRRFWPDKEAILYDALRYLSQQIDVWRRQLMLDETQTAEQKLLARYQALSECVKNNRYPGCLFIAACTFYPDPGHPIHQLADQQKSAAYDFTHELLTTLEVDDPAMVAKQMELVLEGCLSRMLVNRSQADVDTAHRLAEDILRFARCRQGGALT.

The HTH tetR-type domain maps to 1–60 (MQREDVLGEALKLLELQGIANTTLEMVAERVDYPLDELRRFWPDKEAILYDALRYLSQQI).

The polypeptide is HTH-type transcriptional regulator YjdC (yjdC) (Escherichia coli (strain K12)).